A 329-amino-acid chain; its full sequence is GDP-mannose transporter (329 aa).

The Cytoplasmic portion of the chain corresponds to 1–13 (MSELKVDTGRLSH). The chain crosses the membrane as a helical span at residues 14 to 34 (IANSGPMSILAYCASSILMTV). The Lumenal portion of the chain corresponds to 35–44 (TNKCVVGSDK). A helical transmembrane segment spans residues 45–65 (FNMLFVMLFAQSLVCVTALVL). Residues 66 to 79 (LKALGYVQYRPLNK) are Cytoplasmic-facing. Residues 80-100 (VDVKNWLLISVLLVLMTYTSS) traverse the membrane as a helical segment. Residues 101-109 (RALKYLAVP) are Lumenal-facing. A helical membrane pass occupies residues 110 to 130 (IYTIFKNLTIILIAYGEVLFF). Residues 131-133 (GGR) are Cytoplasmic-facing. The chain crosses the membrane as a helical span at residues 134–154 (VTAMELSSFLLIVLSSVVATL). Over 155–174 (GDQQALAKKPLAAAVESILG) the chain is Lumenal. Residues 175–195 (LNVGYFWMFTNCICSALFVLI) form a helical membrane-spanning segment. The Cytoplasmic portion of the chain corresponds to 196 to 214 (MRKRIALTKFKDFDTMFYN). The chain crosses the membrane as a helical span at residues 215-235 (NILSLPLLMLASFMFEDWGAA). Residues 236–245 (NIARNLTKDY) are Lumenal-facing. N240 carries N-linked (GlcNAc...) asparagine glycosylation. Residues 246–266 (IIIMIISGLASVGISYCSGWC) form a helical membrane-spanning segment. At 267-273 (VRVTSST) the chain is on the cytoplasmic side. The chain crosses the membrane as a helical span at residues 274–294 (TYSMVGALNKLPIALSGLLFF). Topologically, residues 295-298 (DAPK) are lumenal. A helical membrane pass occupies residues 299–319 (NFLSIFSIFLGFLSGIVYAVA). Residues 320 to 329 (KQKKQSQPAN) are Cytoplasmic-facing.

This sequence belongs to the TPT transporter family. SLC35D subfamily. Homooligomer.

The protein resides in the golgi apparatus membrane. Its subcellular location is the cytoplasmic vesicle membrane. It localises to the endoplasmic reticulum membrane. Its function is as follows. Involved in the import of GDP-mannose from the cytoplasm into the Golgi lumen. This chain is GDP-mannose transporter (VRG4), found in Eremothecium gossypii (strain ATCC 10895 / CBS 109.51 / FGSC 9923 / NRRL Y-1056) (Yeast).